Reading from the N-terminus, the 666-residue chain is DNA mismatch repair protein MutL (666 aa).

This sequence belongs to the DNA mismatch repair MutL/HexB family.

This protein is involved in the repair of mismatches in DNA. It is required for dam-dependent methyl-directed DNA mismatch repair. May act as a 'molecular matchmaker', a protein that promotes the formation of a stable complex between two or more DNA-binding proteins in an ATP-dependent manner without itself being part of a final effector complex. The polypeptide is DNA mismatch repair protein MutL (Clostridium botulinum (strain 657 / Type Ba4)).